A 42-amino-acid chain; its full sequence is Protein Tat (42 aa).

Residues 1-24 (MEPVDPNLEPWNHPGSQPKTACNQ) are interaction with human CREBBP. Residues 22-37 (CNQCYCKKCSYHCLVC) form a cysteine-rich region. K28 carries the post-translational modification N6-acetyllysine; by host PCAF.

The protein belongs to the lentiviruses Tat family. In terms of assembly, interacts with host CCNT1. Associates with the P-TEFb complex composed at least of Tat, P-TEFb (CDK9 and CCNT1), TAR RNA, RNA Pol II. Recruits the HATs CREBBP, TAF1/TFIID, EP300, PCAF and GCN5L2. Interacts with host KAT5/Tip60; this interaction targets the latter to degradation. Interacts with the host deacetylase SIRT1. Interacts with host capping enzyme RNGTT; this interaction stimulates RNGTT. Binds to host KDR, and to the host integrins ITGAV/ITGB3 and ITGA5/ITGB1. Interacts with host KPNB1/importin beta-1 without previous binding to KPNA1/importin alpha-1. Interacts with EIF2AK2. Interacts with host nucleosome assembly protein NAP1L1; this interaction may be required for the transport of Tat within the nucleus, since the two proteins interact at the nuclear rim. Interacts with host C1QBP/SF2P32; this interaction involves lysine-acetylated Tat. Interacts with the host chemokine receptors CCR2, CCR3 and CXCR4. Interacts with host DPP4/CD26; this interaction may trigger an anti-proliferative effect. Interacts with host LDLR. Interacts with the host extracellular matrix metalloproteinase MMP1. Interacts with host PRMT6; this interaction mediates Tat's methylation. Interacts with, and is ubiquitinated by MDM2/Hdm2. Interacts with host PSMC3 and HTATIP2. Interacts with STAB1; this interaction may overcome SATB1-mediated repression of IL2 and IL2RA (interleukin) in T cells by binding to the same domain than HDAC1. Interacts (when acetylated) with human CDK13, thereby increasing HIV-1 mRNA splicing and promoting the production of the doubly spliced HIV-1 protein Nef. Interacts with host TBP; this interaction modulates the activity of transcriptional pre-initiation complex. Interacts with host RELA. Interacts with host PLSCR1; this interaction negatively regulates Tat transactivation activity by altering its subcellular distribution. In terms of processing, phosphorylated by EIF2AK2 on serine and threonine residues adjacent to the basic region important for TAR RNA binding and function. Phosphorylation of Tat by EIF2AK2 is dependent on the prior activation of EIF2AK2 by dsRNA. Post-translationally, asymmetrical arginine methylation by host PRMT6 seems to diminish the transactivation capacity of Tat and affects the interaction with host CCNT1. Polyubiquitination by host MDM2 does not target Tat to degradation, but activates its transactivation function and fosters interaction with CCNT1 and TAR RNA.

The protein resides in the host nucleus. The protein localises to the host nucleolus. Its subcellular location is the host cytoplasm. It localises to the secreted. In terms of biological role, transcriptional activator that increases RNA Pol II processivity, thereby increasing the level of full-length viral transcripts. Recognizes a hairpin structure at the 5'-LTR of the nascent viral mRNAs referred to as the transactivation responsive RNA element (TAR) and recruits the cyclin T1-CDK9 complex (P-TEFb complex) that will in turn hyperphosphorylate the RNA polymerase II to allow efficient elongation. The CDK9 component of P-TEFb and other Tat-activated kinases hyperphosphorylate the C-terminus of RNA Pol II that becomes stabilized and much more processive. Other factors such as HTATSF1/Tat-SF1, SUPT5H/SPT5, and HTATIP2 are also important for Tat's function. Besides its effect on RNA Pol II processivity, Tat induces chromatin remodeling of proviral genes by recruiting the histone acetyltransferases (HATs) CREBBP, EP300 and PCAF to the chromatin. This also contributes to the increase in proviral transcription rate, especially when the provirus integrates in transcriptionally silent region of the host genome. To ensure maximal activation of the LTR, Tat mediates nuclear translocation of NF-kappa-B by interacting with host RELA. Through its interaction with host TBP, Tat may also modulate transcription initiation. Tat can reactivate a latently infected cell by penetrating in it and transactivating its LTR promoter. In the cytoplasm, Tat is thought to act as a translational activator of HIV-1 mRNAs. Functionally, extracellular circulating Tat can be endocytosed by surrounding uninfected cells via the binding to several surface receptors such as CD26, CXCR4, heparan sulfate proteoglycans (HSPG) or LDLR. Neurons are rarely infected, but they internalize Tat via their LDLR. Through its interaction with nuclear HATs, Tat is potentially able to control the acetylation-dependent cellular gene expression. Modulates the expression of many cellular genes involved in cell survival, proliferation or in coding for cytokines or cytokine receptors. Tat plays a role in T-cell and neurons apoptosis. Tat induced neurotoxicity and apoptosis probably contribute to neuroAIDS. Circulating Tat also acts as a chemokine-like and/or growth factor-like molecule that binds to specific receptors on the surface of the cells, affecting many cellular pathways. In the vascular system, Tat binds to ITGAV/ITGB3 and ITGA5/ITGB1 integrins dimers at the surface of endothelial cells and competes with bFGF for heparin-binding sites, leading to an excess of soluble bFGF. This is Protein Tat from Human immunodeficiency virus type 1 group M subtype C (isolate ETH2220) (HIV-1).